The sequence spans 727 residues: Kinesin-like protein KIN-14G (727 aa).

Disordered stretches follow at residues 100–156, 172–194, and 336–357; these read QTAP…LHLR, HLSA…SCSR, and LAGG…GATR. Positions 114–133 are enriched in polar residues; the sequence is VASSTAGRASRTKSASSTGR. Residues 381–710 form the Kinesin motor domain; it reads NIRVFCRVRP…LRFAARVNSC (330 aa). Residue 461–468 participates in ATP binding; sequence GQTGSGKT.

This sequence belongs to the TRAFAC class myosin-kinesin ATPase superfamily. Kinesin family. KIN-14 subfamily.

In Oryza sativa subsp. japonica (Rice), this protein is Kinesin-like protein KIN-14G.